A 626-amino-acid polypeptide reads, in one-letter code: Phosphomethylpyrimidine synthase (626 aa).

The tract at residues 1–22 (MTKQEKAINLSESAQVDQQSVQ) is disordered. Residues 10–22 (LSESAQVDQQSVQ) show a composition bias toward polar residues. Residues N232, M261, Y290, H326, 346-348 (SRG), 387-390 (DGLR), and E426 each bind substrate. H430 contributes to the Zn(2+) binding site. Residue Y453 participates in substrate binding. H494 lines the Zn(2+) pocket. [4Fe-4S] cluster contacts are provided by C574, C577, and C582.

It belongs to the ThiC family. In terms of assembly, homodimer. Requires [4Fe-4S] cluster as cofactor.

The enzyme catalyses 5-amino-1-(5-phospho-beta-D-ribosyl)imidazole + S-adenosyl-L-methionine = 4-amino-2-methyl-5-(phosphooxymethyl)pyrimidine + CO + 5'-deoxyadenosine + formate + L-methionine + 3 H(+). The protein operates within cofactor biosynthesis; thiamine diphosphate biosynthesis. Catalyzes the synthesis of the hydroxymethylpyrimidine phosphate (HMP-P) moiety of thiamine from aminoimidazole ribotide (AIR) in a radical S-adenosyl-L-methionine (SAM)-dependent reaction. This chain is Phosphomethylpyrimidine synthase, found in Pseudomonas putida (strain ATCC 47054 / DSM 6125 / CFBP 8728 / NCIMB 11950 / KT2440).